Consider the following 222-residue polypeptide: 2-C-methyl-D-erythritol 4-phosphate cytidylyltransferase (222 aa).

It belongs to the IspD/TarI cytidylyltransferase family. IspD subfamily.

The catalysed reaction is 2-C-methyl-D-erythritol 4-phosphate + CTP + H(+) = 4-CDP-2-C-methyl-D-erythritol + diphosphate. Its pathway is isoprenoid biosynthesis; isopentenyl diphosphate biosynthesis via DXP pathway; isopentenyl diphosphate from 1-deoxy-D-xylulose 5-phosphate: step 2/6. Its function is as follows. Catalyzes the formation of 4-diphosphocytidyl-2-C-methyl-D-erythritol from CTP and 2-C-methyl-D-erythritol 4-phosphate (MEP). This Thermotoga sp. (strain RQ2) protein is 2-C-methyl-D-erythritol 4-phosphate cytidylyltransferase.